A 293-amino-acid polypeptide reads, in one-letter code: Diaminopimelate epimerase (293 aa).

Positions 13, 46, and 66 each coordinate substrate. Cys-75 acts as the Proton donor in catalysis. Residues Gly-76 to Asn-77, Asn-162, Asn-195, and Glu-213 to Arg-214 contribute to the substrate site. Cys-222 (proton acceptor) is an active-site residue. Position 223–224 (Gly-223–Thr-224) interacts with substrate.

The protein belongs to the diaminopimelate epimerase family. Homodimer.

The protein localises to the cytoplasm. The catalysed reaction is (2S,6S)-2,6-diaminopimelate = meso-2,6-diaminopimelate. It functions in the pathway amino-acid biosynthesis; L-lysine biosynthesis via DAP pathway; DL-2,6-diaminopimelate from LL-2,6-diaminopimelate: step 1/1. Catalyzes the stereoinversion of LL-2,6-diaminopimelate (L,L-DAP) to meso-diaminopimelate (meso-DAP), a precursor of L-lysine and an essential component of the bacterial peptidoglycan. This Psychrobacter sp. (strain PRwf-1) protein is Diaminopimelate epimerase.